The chain runs to 436 residues: 3-phosphoshikimate 1-carboxyvinyltransferase (436 aa).

Lys23, Ser24, and Arg28 together coordinate 3-phosphoshikimate. Lys23 contributes to the phosphoenolpyruvate binding site. The phosphoenolpyruvate site is built by Gly97 and Arg126. 3-phosphoshikimate contacts are provided by Ser171, Gln173, Asp323, and Lys350. Gln173 lines the phosphoenolpyruvate pocket. The Proton acceptor role is filled by Asp323. Phosphoenolpyruvate is bound by residues Arg354 and Arg396.

This sequence belongs to the EPSP synthase family. As to quaternary structure, monomer.

Its subcellular location is the cytoplasm. It carries out the reaction 3-phosphoshikimate + phosphoenolpyruvate = 5-O-(1-carboxyvinyl)-3-phosphoshikimate + phosphate. Its pathway is metabolic intermediate biosynthesis; chorismate biosynthesis; chorismate from D-erythrose 4-phosphate and phosphoenolpyruvate: step 6/7. Its function is as follows. Catalyzes the transfer of the enolpyruvyl moiety of phosphoenolpyruvate (PEP) to the 5-hydroxyl of shikimate-3-phosphate (S3P) to produce enolpyruvyl shikimate-3-phosphate and inorganic phosphate. This Prochlorococcus marinus (strain AS9601) protein is 3-phosphoshikimate 1-carboxyvinyltransferase.